The primary structure comprises 55 residues: Accessory gland-specific peptide 70A (55 aa).

The first 19 residues, 1 to 19 (MKTLSVFLVLVCLLGLVQS), serve as a signal peptide directing secretion. Hydroxyproline is present on residues proline 28, proline 32, proline 34, and proline 38. A disulfide bridge connects residues cysteine 43 and cysteine 55.

As to expression, main cells of the accessory glands of males (paragonial gland).

Its subcellular location is the secreted. Functionally, represses female sexual receptivity and stimulates oviposition. This is Accessory gland-specific peptide 70A (Acp70A) from Drosophila sechellia (Fruit fly).